Reading from the N-terminus, the 159-residue chain is Probable chemoreceptor glutamine deamidase CheD 2 (159 aa).

This sequence belongs to the CheD family.

It catalyses the reaction L-glutaminyl-[protein] + H2O = L-glutamyl-[protein] + NH4(+). In terms of biological role, probably deamidates glutamine residues to glutamate on methyl-accepting chemotaxis receptors (MCPs), playing an important role in chemotaxis. The protein is Probable chemoreceptor glutamine deamidase CheD 2 of Anaeromyxobacter dehalogenans (strain 2CP-C).